We begin with the raw amino-acid sequence, 122 residues long: MARIAGIDLPRGKRSDIALSYIYGVGRVTALKVLDAVGINWSRSIDDLSAEELNEVRKELEKNYKVEGELRREVSANIKRLMDIGCYRGLRHRKGLPVHGQRTHTNARTRKGPRKGAVGKKK.

The disordered stretch occupies residues 95–122; the sequence is GLPVHGQRTHTNARTRKGPRKGAVGKKK.

It belongs to the universal ribosomal protein uS13 family. As to quaternary structure, part of the 30S ribosomal subunit. Forms a loose heterodimer with protein S19. Forms two bridges to the 50S subunit in the 70S ribosome.

Its function is as follows. Located at the top of the head of the 30S subunit, it contacts several helices of the 16S rRNA. In the 70S ribosome it contacts the 23S rRNA (bridge B1a) and protein L5 of the 50S subunit (bridge B1b), connecting the 2 subunits; these bridges are implicated in subunit movement. Contacts the tRNAs in the A and P-sites. The polypeptide is Small ribosomal subunit protein uS13 (Lawsonia intracellularis (strain PHE/MN1-00)).